We begin with the raw amino-acid sequence, 488 residues long: Proline--tRNA ligase (488 aa).

This sequence belongs to the class-II aminoacyl-tRNA synthetase family. ProS type 3 subfamily. In terms of assembly, homodimer.

Its subcellular location is the cytoplasm. The enzyme catalyses tRNA(Pro) + L-proline + ATP = L-prolyl-tRNA(Pro) + AMP + diphosphate. Its function is as follows. Catalyzes the attachment of proline to tRNA(Pro) in a two-step reaction: proline is first activated by ATP to form Pro-AMP and then transferred to the acceptor end of tRNA(Pro). Can inadvertently accommodate and process cysteine. The protein is Proline--tRNA ligase (proS) of Borreliella burgdorferi (strain ATCC 35210 / DSM 4680 / CIP 102532 / B31) (Borrelia burgdorferi).